The following is a 286-amino-acid chain: ATP synthase gamma chain (286 aa).

The protein belongs to the ATPase gamma chain family. As to quaternary structure, F-type ATPases have 2 components, CF(1) - the catalytic core - and CF(0) - the membrane proton channel. CF(1) has five subunits: alpha(3), beta(3), gamma(1), delta(1), epsilon(1). CF(0) has three main subunits: a, b and c.

It localises to the cell inner membrane. Produces ATP from ADP in the presence of a proton gradient across the membrane. The gamma chain is believed to be important in regulating ATPase activity and the flow of protons through the CF(0) complex. The protein is ATP synthase gamma chain of Alteromonas mediterranea (strain DSM 17117 / CIP 110805 / LMG 28347 / Deep ecotype).